Consider the following 397-residue polypeptide: Acetate kinase (397 aa).

Asn8 is a Mg(2+) binding site. An ATP-binding site is contributed by Lys15. Arg89 contributes to the substrate binding site. Asp146 (proton donor/acceptor) is an active-site residue. Residues 206–210, 281–283, and 329–333 contribute to the ATP site; these read HLGNG, DLR, and GIGEN. Glu382 contributes to the Mg(2+) binding site.

Belongs to the acetokinase family. In terms of assembly, homodimer. It depends on Mg(2+) as a cofactor. Requires Mn(2+) as cofactor.

It localises to the cytoplasm. It catalyses the reaction acetate + ATP = acetyl phosphate + ADP. Its pathway is metabolic intermediate biosynthesis; acetyl-CoA biosynthesis; acetyl-CoA from acetate: step 1/2. Functionally, catalyzes the formation of acetyl phosphate from acetate and ATP. Can also catalyze the reverse reaction. This is Acetate kinase from Anoxybacillus flavithermus (strain DSM 21510 / WK1).